The sequence spans 460 residues: ATP synthase subunit beta (460 aa).

150–157 is an ATP binding site; sequence GGAGVGKT.

The protein belongs to the ATPase alpha/beta chains family. F-type ATPases have 2 components, CF(1) - the catalytic core - and CF(0) - the membrane proton channel. CF(1) has five subunits: alpha(3), beta(3), gamma(1), delta(1), epsilon(1). CF(0) has three main subunits: a(1), b(2) and c(9-12). The alpha and beta chains form an alternating ring which encloses part of the gamma chain. CF(1) is attached to CF(0) by a central stalk formed by the gamma and epsilon chains, while a peripheral stalk is formed by the delta and b chains.

It is found in the cell inner membrane. It carries out the reaction ATP + H2O + 4 H(+)(in) = ADP + phosphate + 5 H(+)(out). Functionally, produces ATP from ADP in the presence of a proton gradient across the membrane. The catalytic sites are hosted primarily by the beta subunits. This is ATP synthase subunit beta from Pectobacterium carotovorum subsp. carotovorum (strain PC1).